The chain runs to 868 residues: Sporulation-specific protein 75 (868 aa).

At 1-34 (MNATKELTFNLLNKFQDKERFGSAQRHAGISLKG) the chain is on the extracellular side. Asn2 carries an N-linked (GlcNAc...) asparagine glycan. The helical transmembrane segment at 35 to 55 (FISGILFSFLYFLFQLSLFII) threads the bilayer. The Cytoplasmic segment spans residues 56–127 (LRSRFKTIYQ…DNYLFLRFLK (72 aa)). Residues 128-148 (LLIFFFAVLSIINIPILIPIH) traverse the membrane as a helical segment. The Extracellular portion of the chain corresponds to 149–187 (YFSRDILKENEGERYEQSFRTTSKLDKWTMSNLSPNSSN). N-linked (GlcNAc...) asparagine glycosylation is present at Asn184. The chain crosses the membrane as a helical span at residues 188 to 208 (TLICHLFLSIFVVLWFHFILS). The Cytoplasmic portion of the chain corresponds to 209 to 481 (SELRFVNRLG…AKYFSANILR (273 aa)). The chain crosses the membrane as a helical span at residues 482–502 (IFVIIGWILPVAFLGLISQIP). A glycan (N-linked (GlcNAc...) asparagine) is linked at Asn503. The Extracellular segment spans residues 503–527 (NISSLIPFTKIIHFQSPFIREVAKN). The helical transmembrane segment at 528-548 (LIPIVTLIIIIEIVPYFFRWL) threads the bilayer. Residues 549–569 (SYLRGLKTGAQIEADVQNWYF) lie on the Cytoplasmic side of the membrane. The helical transmembrane segment at 570–590 (VFVFIHLFVVVTISSGFSIII) threads the bilayer. The Extracellular segment spans residues 591 to 611 (ERLLNNPVSIPALLANDLPKC). A helical transmembrane segment spans residues 612–632 (ANFFCSFVLIRGMAYAGGNLL). Residues 633 to 660 (RIKELLFELFYYKWKRSTPHAQFKRLKT) are Cytoplasmic-facing. Residues 661-683 (SLFFQLGSIYPIFSVLGCIGIIY) form a helical membrane-spanning segment. Topologically, residues 684–692 (SVVAPIILL) are extracellular. Residues 693-713 (LCCISFSMVFFSFSYLFKYQY) form a helical membrane-spanning segment. Topologically, residues 714–730 (NKENYSETFGKLYIQAL) are cytoplasmic. The chain crosses the membrane as a helical span at residues 731 to 751 (MQLYAGIYFMEFCLLGLFTLF). Residues 752-753 (DQ) are Extracellular-facing. A helical membrane pass occupies residues 754-774 (YTLSTIMLVVFALTVITHSKI). Topologically, residues 775-868 (SKQIKSKPQR…DCHLENSHLH (94 aa)) are cytoplasmic.

This sequence belongs to the CSC1 (TC 1.A.17) family.

The protein localises to the membrane. Acts as an osmosensitive calcium-permeable cation channel. Required for spore wall assembly and ascus formation. This is Sporulation-specific protein 75 (SPO75) from Saccharomyces cerevisiae (strain ATCC 204508 / S288c) (Baker's yeast).